A 600-amino-acid polypeptide reads, in one-letter code: UvrABC system protein C (600 aa).

One can recognise a GIY-YIG domain in the interval 15-100; that stretch reads NSAGVYQYFN…IKQLHPKYNI (86 aa). The region spanning 203–238 is the UVR domain; that stretch reads SILIKNLEKQMLVLAQNENYEEAAKVRDQIVTIKDL.

The protein belongs to the UvrC family. In terms of assembly, interacts with UvrB in an incision complex.

It is found in the cytoplasm. In terms of biological role, the UvrABC repair system catalyzes the recognition and processing of DNA lesions. UvrC both incises the 5' and 3' sides of the lesion. The N-terminal half is responsible for the 3' incision and the C-terminal half is responsible for the 5' incision. The polypeptide is UvrABC system protein C (Campylobacter jejuni subsp. jejuni serotype O:6 (strain 81116 / NCTC 11828)).